Reading from the N-terminus, the 512-residue chain is MLVSNGGTGSAHEWDRTTIDYDIEPSSDTHAIEISSNDDYLHPLAQFKKSEEFDEVPTNTLIHEVPSFSDSASNIQSQRNLSPFKELEIVSKKKSEQTFSSAVDFSAINVKNLNLKSGLFDPEPPSYDPDYAFNQRSLQSDPGSDEMFRNFKKSISLEELKSSYKLASAEMCEPETRLSFLQLALQAEKSSSRRNREYVARKKEEAFDYLTSFVSQGNSFFGYSEALYLLAVCYGTGALRTEINEKEAYRLYKMAADLNHVQAAYRVAICLQMGFGVTQNTEEAIHYFFRAASGQHVGAMHRMALIYFRGLMSVKRDPVKAMYYLNLGALEADHEFPQALYDLAELYEHGSSYLDGLLELSPRKAFVLYHIAAKYGLKDAQLRVARCFELGQLECDINLVRSFVWYRRLARKRNPEAMWKLSQFYLNGVDDVIYPNPELANEWAKAAAYKNHHLASTFVQDVGKEDVFEKTSITISNEERKSRNSESLPKKKKRLSMLSFKRSKNRESCIIS.

Sel1-like repeat units lie at residues Ser-224–His-260, Val-261–His-296, Val-297–Asp-333, Pro-337–Leu-377, Lys-378–Asn-414, and Pro-415–His-452. Cys-509 is modified (cysteine methyl ester). Residue Cys-509 is the site of S-farnesyl cysteine attachment. The propeptide at Ile-510 to Ser-512 is removed in mature form.

It localises to the membrane. Involved in chitin biosynthesis. The sequence is that of Chitin synthase regulatory factor 2 (chr2) from Schizosaccharomyces pombe (strain 972 / ATCC 24843) (Fission yeast).